The chain runs to 214 residues: MLISFEGIDGAGKSTQVMKLKRYLQERGREVLALREPGGTPVAEEIRELLLERRNDITPVGELLLFAASRAELVQQVIQPALENDSDVILDRFFDSTTAYQGYGRGLDLDMLAEINRIASCRLVPDVTFYLDLTPEDALMRKFSEKSLPLAFESEELDRMENSGLDFYRRVREGYHKIGGENPNRIIIIDALLSPSEIHRKIISSIDALCTKTA.

Residue 7–14 coordinates ATP; that stretch reads GIDGAGKS.

Belongs to the thymidylate kinase family.

It catalyses the reaction dTMP + ATP = dTDP + ADP. Functionally, phosphorylation of dTMP to form dTDP in both de novo and salvage pathways of dTTP synthesis. This Chlorobaculum tepidum (strain ATCC 49652 / DSM 12025 / NBRC 103806 / TLS) (Chlorobium tepidum) protein is Thymidylate kinase.